Here is a 196-residue protein sequence, read N- to C-terminus: Imidazole glycerol phosphate synthase subunit HisH (196 aa).

The Glutamine amidotransferase type-1 domain occupies 2–196 (NVVILDTGCA…AQLLKNFLEM (195 aa)). Residue Cys77 is the Nucleophile of the active site. Active-site residues include His178 and Glu180.

As to quaternary structure, heterodimer of HisH and HisF.

The protein localises to the cytoplasm. It carries out the reaction 5-[(5-phospho-1-deoxy-D-ribulos-1-ylimino)methylamino]-1-(5-phospho-beta-D-ribosyl)imidazole-4-carboxamide + L-glutamine = D-erythro-1-(imidazol-4-yl)glycerol 3-phosphate + 5-amino-1-(5-phospho-beta-D-ribosyl)imidazole-4-carboxamide + L-glutamate + H(+). The catalysed reaction is L-glutamine + H2O = L-glutamate + NH4(+). It functions in the pathway amino-acid biosynthesis; L-histidine biosynthesis; L-histidine from 5-phospho-alpha-D-ribose 1-diphosphate: step 5/9. In terms of biological role, IGPS catalyzes the conversion of PRFAR and glutamine to IGP, AICAR and glutamate. The HisH subunit catalyzes the hydrolysis of glutamine to glutamate and ammonia as part of the synthesis of IGP and AICAR. The resulting ammonia molecule is channeled to the active site of HisF. In Salmonella choleraesuis (strain SC-B67), this protein is Imidazole glycerol phosphate synthase subunit HisH.